The primary structure comprises 87 residues: Retinal rod rhodopsin-sensitive cGMP 3',5'-cyclic phosphodiesterase subunit gamma (87 aa).

Met1 bears the N-acetylmethionine mark. Basic and acidic residues predominate over residues 1–12 (MNLEPPKGEIRS). A disordered region spans residues 1–55 (MNLEPPKGEIRSATRVIGGPVTPRKGPPKFKQRQTRQFKSKPPKKGVQGFGDDIP). Residues 26–44 (GPPKFKQRQTRQFKSKPPK) show a composition bias toward basic residues.

It belongs to the rod/cone cGMP-PDE gamma subunit family. In terms of assembly, oligomer composed of two catalytic chains (alpha and beta), an inhibitory chain (gamma) and the delta chain.

It catalyses the reaction 3',5'-cyclic GMP + H2O = GMP + H(+). Functionally, participates in processes of transmission and amplification of the visual signal. cGMP-PDEs are the effector molecules in G-protein-mediated phototransduction in vertebrate rods and cones. This is Retinal rod rhodopsin-sensitive cGMP 3',5'-cyclic phosphodiesterase subunit gamma (Pde6g) from Mus musculus (Mouse).